Here is a 250-residue protein sequence, read N- to C-terminus: L-ascorbate peroxidase, cytosolic (250 aa).

His42 serves as the catalytic Proton acceptor. The segment at 113–137 (VPFHPGREDKPEPPPEGRLPDATKG) is disordered. The span at 117–137 (PGREDKPEPPPEGRLPDATKG) shows a compositional bias: basic and acidic residues. His163 provides a ligand contact to heme b. Residues Thr164, Thr180, Asn182, Ile185, and Asp187 each coordinate K(+).

The protein belongs to the peroxidase family. Ascorbate peroxidase subfamily. The cofactor is heme b.

The protein localises to the cytoplasm. It catalyses the reaction L-ascorbate + H2O2 = L-dehydroascorbate + 2 H2O. Its function is as follows. Plays a key role in hydrogen peroxide removal. The polypeptide is L-ascorbate peroxidase, cytosolic (APX1) (Pisum sativum (Garden pea)).